Here is a 347-residue protein sequence, read N- to C-terminus: Protein RecA (347 aa).

Residue 68–75 participates in ATP binding; it reads GPESSGKT.

This sequence belongs to the RecA family.

It is found in the cytoplasm. In terms of biological role, can catalyze the hydrolysis of ATP in the presence of single-stranded DNA, the ATP-dependent uptake of single-stranded DNA by duplex DNA, and the ATP-dependent hybridization of homologous single-stranded DNAs. It interacts with LexA causing its activation and leading to its autocatalytic cleavage. This Nocardia farcinica (strain IFM 10152) protein is Protein RecA.